We begin with the raw amino-acid sequence, 251 residues long: 1-(5-phosphoribosyl)-5-[(5-phosphoribosylamino)methylideneamino] imidazole-4-carboxamide isomerase (251 aa).

The Proton acceptor role is filled by Asp8. Asp131 serves as the catalytic Proton donor.

It belongs to the HisA/HisF family.

The protein localises to the cytoplasm. The enzyme catalyses 1-(5-phospho-beta-D-ribosyl)-5-[(5-phospho-beta-D-ribosylamino)methylideneamino]imidazole-4-carboxamide = 5-[(5-phospho-1-deoxy-D-ribulos-1-ylimino)methylamino]-1-(5-phospho-beta-D-ribosyl)imidazole-4-carboxamide. It participates in amino-acid biosynthesis; L-histidine biosynthesis; L-histidine from 5-phospho-alpha-D-ribose 1-diphosphate: step 4/9. This is 1-(5-phosphoribosyl)-5-[(5-phosphoribosylamino)methylideneamino] imidazole-4-carboxamide isomerase from Burkholderia thailandensis (strain ATCC 700388 / DSM 13276 / CCUG 48851 / CIP 106301 / E264).